Reading from the N-terminus, the 177-residue chain is Thymidine kinase (177 aa).

An ATP-binding site is contributed by Gly11–Ser18. The active-site Proton acceptor is the Glu83. Substrate is bound at residue Phe113. Zn(2+) contacts are provided by Cys138 and Cys141. Ile157–Gly161 lines the substrate pocket. The Zn(2+) site is built by Cys170 and Cys173.

This sequence belongs to the thymidine kinase family. In terms of assembly, homotetramer. Two molecules of substrate bind to each enzyme tetramer.

The catalysed reaction is thymidine + ATP = dTMP + ADP + H(+). Functionally, phosphorylates thymidine and thymidine analogs, such as azidothymidine (AZT). Part of the salvage pathway for pyrimidine deoxyribonucleotide synthesis. This is Thymidine kinase (OPG101) from Vaccinia virus (strain Tian Tan) (VACV).